We begin with the raw amino-acid sequence, 316 residues long: tRNA dimethylallyltransferase (316 aa).

17–24 (GPTASGKT) lines the ATP pocket. Position 19 to 24 (19 to 24 (TASGKT)) interacts with substrate. Interaction with substrate tRNA stretches follow at residues 42 to 45 (DSAL), 166 to 170 (QRLSR), 247 to 252 (RCVGYR), and 280 to 287 (KRQITWLR).

This sequence belongs to the IPP transferase family. As to quaternary structure, monomer. The cofactor is Mg(2+).

The enzyme catalyses adenosine(37) in tRNA + dimethylallyl diphosphate = N(6)-dimethylallyladenosine(37) in tRNA + diphosphate. Catalyzes the transfer of a dimethylallyl group onto the adenine at position 37 in tRNAs that read codons beginning with uridine, leading to the formation of N6-(dimethylallyl)adenosine (i(6)A). In Escherichia fergusonii (strain ATCC 35469 / DSM 13698 / CCUG 18766 / IAM 14443 / JCM 21226 / LMG 7866 / NBRC 102419 / NCTC 12128 / CDC 0568-73), this protein is tRNA dimethylallyltransferase.